The chain runs to 253 residues: Triosephosphate isomerase (253 aa).

Residue 8-10 (NWK) coordinates substrate. Catalysis depends on H93, which acts as the Electrophile. E165 serves as the catalytic Proton acceptor. Substrate contacts are provided by residues G171, S210, and 231–232 (GG).

Belongs to the triosephosphate isomerase family. As to quaternary structure, homodimer.

Its subcellular location is the cytoplasm. The catalysed reaction is D-glyceraldehyde 3-phosphate = dihydroxyacetone phosphate. The protein operates within carbohydrate biosynthesis; gluconeogenesis. It participates in carbohydrate degradation; glycolysis; D-glyceraldehyde 3-phosphate from glycerone phosphate: step 1/1. Functionally, involved in the gluconeogenesis. Catalyzes stereospecifically the conversion of dihydroxyacetone phosphate (DHAP) to D-glyceraldehyde-3-phosphate (G3P). This Francisella tularensis subsp. holarctica (strain FTNF002-00 / FTA) protein is Triosephosphate isomerase.